Consider the following 75-residue polypeptide: U6-lycotoxin-Ls1a (75 aa).

Residues 1–21 (MKLLLFTALVLVVISLIEVEA) form the signal peptide. The propeptide occupies 22–25 (ENER).

It belongs to the neurotoxin 19 (CSTX) family. 06 (U6-Lctx) subfamily. Post-translationally, contains 4 disulfide bonds. As to expression, expressed by the venom gland.

It localises to the secreted. This Lycosa singoriensis (Wolf spider) protein is U6-lycotoxin-Ls1a.